The chain runs to 456 residues: Exodeoxyribonuclease 7 large subunit (456 aa).

This sequence belongs to the XseA family. In terms of assembly, heterooligomer composed of large and small subunits.

It is found in the cytoplasm. The catalysed reaction is Exonucleolytic cleavage in either 5'- to 3'- or 3'- to 5'-direction to yield nucleoside 5'-phosphates.. In terms of biological role, bidirectionally degrades single-stranded DNA into large acid-insoluble oligonucleotides, which are then degraded further into small acid-soluble oligonucleotides. The polypeptide is Exodeoxyribonuclease 7 large subunit (Azotobacter vinelandii (strain DJ / ATCC BAA-1303)).